Consider the following 344-residue polypeptide: MEARLKELKQKALELIEEAKELKGLNDVRVAYLGKKGPITEVLRGMGKLSAEERPRMGALVNEVREAIQTRLEDKIGNLEKAVIEAKLATETIDVTLPGRPVETGCHHPLTAVVEQIEDVFIGMGYEVAEGTEVEKDYYNFEALNLPKDHPARDMQDTFYITEETLLRTHTSSVQARTMEKNKEKGPIKIICPGKVYRRDDDDATHSHQFMQIEGLVIDKNIRMSDLKGTLQVFVKKMFGEDREIRLRPSFFPFTEPSVEMDISCMMCHGKGCGTCKGTGWIEILGAGMVHPNVLEMAGYDSKEYQGFAFGMGAERIAMLKYGVDDIRHFYTNDVRFLQQFKRA.

Glu256 serves as a coordination point for Mg(2+).

Belongs to the class-II aminoacyl-tRNA synthetase family. Phe-tRNA synthetase alpha subunit type 1 subfamily. In terms of assembly, tetramer of two alpha and two beta subunits. The cofactor is Mg(2+).

It is found in the cytoplasm. The enzyme catalyses tRNA(Phe) + L-phenylalanine + ATP = L-phenylalanyl-tRNA(Phe) + AMP + diphosphate + H(+). The sequence is that of Phenylalanine--tRNA ligase alpha subunit from Bacillus mycoides (strain KBAB4) (Bacillus weihenstephanensis).